Consider the following 959-residue polypeptide: DEAD-box ATP-dependent RNA helicase rde-12 (959 aa).

Positions 1–336 are disordered; sequence MSSFGNNAGG…EGVNAPVRAP (336 aa). Basic and acidic residues predominate over residues 71–97; the sequence is GRREDDRSHSRDNHGGSRYGERDDRGN. Residues 98-118 are compositionally biased toward polar residues; that stretch reads NGRSADNRYSQSNYNYDSNRG. The segment covering 122 to 134 has biased composition (basic and acidic residues); sequence YQRDNHGSKDDRG. The segment covering 137 to 160 has biased composition (polar residues); it reads NQYNDHGSNHNSNSRNDQYRQGSY. Basic and acidic residues-rich tracts occupy residues 166 to 181 and 189 to 201; these read SGYRRDDDRRRNDNDQ and RDSDRNSPRDHHN. The segment covering 202-213 has biased composition (polar residues); it reads YNSQSSPRSHQG. 2 stretches are compositionally biased toward basic and acidic residues: residues 219–239 and 255–270; these read SAPKEDNQRRYDNHQGGHDSY and YRNDYRSQQDSRDHRS. Low complexity predominate over residues 271–280; it reads GGNNSSSGFK. Residues 281–301 are compositionally biased toward gly residues; that stretch reads NDGGFGGNDNRGFGNNGGGSF. Residues 302-317 show a composition bias toward low complexity; that stretch reads GNPNNSYRGNSNNIGG. The Q motif signature appears at 380–408; sequence TSWTNSGLHPTILETLKRIKYNNVRTIQG. In terms of domain architecture, Helicase ATP-binding spans 411-599; the sequence is IPQVLDGHDV…NELMKRLPGQ (189 aa). 424–431 is an ATP binding site; that stretch reads AETSAGKT. The short motif at 539 to 542 is the DEAD box element; sequence DEAD. The Helicase C-terminal domain maps to 632-792; that stretch reads KLREILKQNV…KVPDFLDAMA (161 aa). Disordered regions lie at residues 793–834 and 858–959; these read KSSR…GGGR and GGGG…DDEW. Composition is skewed to gly residues over residues 800–834 and 858–872; these read GTSGFGQRGGYGGRGGGFGGTGRGRGGGVFGGGGR and GGGGFGGVKPSGFGG. Residues 930 to 941 are compositionally biased toward polar residues; it reads TLGSSTFGTANN. Positions 942 to 959 are enriched in acidic residues; it reads ADEEPTETGADGNDDDEW.

The protein belongs to the DEAD box helicase family. DDX3/DED1 subfamily. As to quaternary structure, interacts with wago-1, ergo-1 and rde-1. The cofactor is Mg(2+). Expressed in the soma and germline.

It is found in the cytoplasm. The protein resides in the perinuclear region. The protein localises to the cytoplasmic granule. It localises to the P-body. The catalysed reaction is ATP + H2O = ADP + phosphate + H(+). Its function is as follows. Probable ATP-dependent RNA helicase involved in RNAi-mediated gene silencing. Specifically required in the endogenous siRNA pathway for biogenesis of secondary endogenous small interfering RNA (siRNA) intermediates called 22G-RNAs. May associate with and recruit rde-10 to primary siRNA-targeted mRNA for secondary siRNA synthesis. May be recruited to target mRNAs by rde-1 and/or ergo-1. The protein is DEAD-box ATP-dependent RNA helicase rde-12 of Caenorhabditis elegans.